Reading from the N-terminus, the 198-residue chain is Pyridoxal 5'-phosphate synthase subunit PdxT (198 aa).

Position 49–51 (49–51) interacts with L-glutamine; it reads GES. C81 serves as the catalytic Nucleophile. L-glutamine is bound by residues R113 and 141-142; that span reads IR. Active-site charge relay system residues include H177 and E179.

It belongs to the glutaminase PdxT/SNO family. As to quaternary structure, in the presence of PdxS, forms a dodecamer of heterodimers. Only shows activity in the heterodimer.

The enzyme catalyses aldehydo-D-ribose 5-phosphate + D-glyceraldehyde 3-phosphate + L-glutamine = pyridoxal 5'-phosphate + L-glutamate + phosphate + 3 H2O + H(+). It catalyses the reaction L-glutamine + H2O = L-glutamate + NH4(+). The protein operates within cofactor biosynthesis; pyridoxal 5'-phosphate biosynthesis. Catalyzes the hydrolysis of glutamine to glutamate and ammonia as part of the biosynthesis of pyridoxal 5'-phosphate. The resulting ammonia molecule is channeled to the active site of PdxS. This is Pyridoxal 5'-phosphate synthase subunit PdxT from Mycobacterium leprae (strain TN).